Here is a 343-residue protein sequence, read N- to C-terminus: Holliday junction branch migration complex subunit RuvB (343 aa).

The segment at 1-185 is large ATPase domain (RuvB-L); the sequence is MEQEDFNIRE…FGINLHLEYY (185 aa). Residues L24, R25, G66, K69, T70, T71, 132 to 134, R175, Y185, and R222 each bind ATP; that span reads EDY. T70 is a Mg(2+) binding site. The segment at 186–256 is small ATPAse domain (RuvB-S); that stretch reads DDDILSNIIR…IAQFALEALN (71 aa). Positions 259–343 are head domain (RuvB-H); that stretch reads KYGLDEIDNK…YSSQKTLFND (85 aa). R314 and R319 together coordinate DNA.

It belongs to the RuvB family. As to quaternary structure, homohexamer. Forms an RuvA(8)-RuvB(12)-Holliday junction (HJ) complex. HJ DNA is sandwiched between 2 RuvA tetramers; dsDNA enters through RuvA and exits via RuvB. An RuvB hexamer assembles on each DNA strand where it exits the tetramer. Each RuvB hexamer is contacted by two RuvA subunits (via domain III) on 2 adjacent RuvB subunits; this complex drives branch migration. In the full resolvosome a probable DNA-RuvA(4)-RuvB(12)-RuvC(2) complex forms which resolves the HJ.

The protein resides in the cytoplasm. It carries out the reaction ATP + H2O = ADP + phosphate + H(+). Its function is as follows. The RuvA-RuvB-RuvC complex processes Holliday junction (HJ) DNA during genetic recombination and DNA repair, while the RuvA-RuvB complex plays an important role in the rescue of blocked DNA replication forks via replication fork reversal (RFR). RuvA specifically binds to HJ cruciform DNA, conferring on it an open structure. The RuvB hexamer acts as an ATP-dependent pump, pulling dsDNA into and through the RuvAB complex. RuvB forms 2 homohexamers on either side of HJ DNA bound by 1 or 2 RuvA tetramers; 4 subunits per hexamer contact DNA at a time. Coordinated motions by a converter formed by DNA-disengaged RuvB subunits stimulates ATP hydrolysis and nucleotide exchange. Immobilization of the converter enables RuvB to convert the ATP-contained energy into a lever motion, pulling 2 nucleotides of DNA out of the RuvA tetramer per ATP hydrolyzed, thus driving DNA branch migration. The RuvB motors rotate together with the DNA substrate, which together with the progressing nucleotide cycle form the mechanistic basis for DNA recombination by continuous HJ branch migration. Branch migration allows RuvC to scan DNA until it finds its consensus sequence, where it cleaves and resolves cruciform DNA. The polypeptide is Holliday junction branch migration complex subunit RuvB (Bacteroides thetaiotaomicron (strain ATCC 29148 / DSM 2079 / JCM 5827 / CCUG 10774 / NCTC 10582 / VPI-5482 / E50)).